The following is a 740-amino-acid chain: Inhibitor of nuclear factor kappa-B kinase subunit alpha (740 aa).

The Protein kinase domain occupies 15-302; sequence WEMRERLGTG…LTLKQPRCFV (288 aa). ATP is bound by residues 21-29 and K44; that span reads LGTGGFGNV. T23 bears the Phosphothreonine; by PKB/AKT1 mark. Residue D144 is the Proton acceptor of the active site. S176 is subject to Phosphoserine; by MAP3K14. A Phosphoserine modification is found at S180. The segment at 455-476 is leucine-zipper; that stretch reads LLRYNTNLTKMKNTLISASQQL. The tract at residues 733–738 is NEMO-binding; the sequence is LDWSWL.

This sequence belongs to the protein kinase superfamily. Ser/Thr protein kinase family. I-kappa-B kinase subfamily. Component of the I-kappa-B-kinase (IKK) core complex consisting of CHUK, IKBKB and IKBKG; probably four alpha/CHUK-beta/IKBKB dimers are associated with four gamma/IKBKG subunits. The IKK core complex seems to associate with regulatory or adapter proteins to form a IKK-signalosome holo-complex. The IKK complex associates with TERF2IP/RAP1, leading to promote IKK-mediated phosphorylation of RELA/p65. Part of a complex composed of NCOA2, NCOA3, CHUK/IKKA, IKBKB, IKBKG and CREBBP. Part of a 70-90 kDa complex at least consisting of CHUK/IKKA, IKBKB, NFKBIA, RELA, ELP1 and MAP3K14. Directly interacts with TRPC4AP. May interact with TRAF2. Interacts with NALP2. May interact with MAVS/IPS1. Interacts with ARRB1 and ARRB2. Interacts with NLRC5; prevents CHUK phosphorylation and kinase activity. Interacts with PIAS1; this interaction induces PIAS1 phosphorylation. Interacts with ZNF268 isoform 2; the interaction is further increased in a TNF-alpha-dependent manner. Interacts with IFIT5; the interaction synergizes the recruitment of IKK to MAP3K7 and enhances IKK phosphorylation. Interacts with LRRC14. Directly interacts with DDX3X after the physiological activation of the TLR7 and TLR8 pathways; this interaction enhances CHUK autophosphorylation. Ubiquitinated by TRIM56 via 'Lys-63'-linked ubiquitination, promoting activation of CHUK/IKKA. In terms of processing, phosphorylated by MAP3K14/NIK, AKT and to a lesser extent by MEKK1, and dephosphorylated by PP2A. Autophosphorylated.

Its subcellular location is the cytoplasm. It is found in the nucleus. The enzyme catalyses L-seryl-[I-kappa-B protein] + ATP = O-phospho-L-seryl-[I-kappa-B protein] + ADP + H(+). With respect to regulation, activated when phosphorylated and inactivated when dephosphorylated. Its function is as follows. Serine kinase that plays an essential role in the NF-kappa-B signaling pathway which is activated by multiple stimuli such as inflammatory cytokines, bacterial or viral products, DNA damages or other cellular stresses. Acts as a part of the canonical IKK complex in the conventional pathway of NF-kappa-B activation and phosphorylates inhibitors of NF-kappa-B on serine residues. These modifications allow polyubiquitination of the inhibitors and subsequent degradation by the proteasome. In turn, free NF-kappa-B is translocated into the nucleus and activates the transcription of hundreds of genes involved in immune response, growth control, or protection against apoptosis. Negatively regulates the pathway by phosphorylating the scaffold protein TAXBP1 and thus promoting the assembly of the A20/TNFAIP3 ubiquitin-editing complex (composed of A20/TNFAIP3, TAX1BP1, and the E3 ligases ITCH and RNF11). Therefore, CHUK plays a key role in the negative feedback of NF-kappa-B canonical signaling to limit inflammatory gene activation. As part of the non-canonical pathway of NF-kappa-B activation, the MAP3K14-activated CHUK/IKKA homodimer phosphorylates NFKB2/p100 associated with RelB, inducing its proteolytic processing to NFKB2/p52 and the formation of NF-kappa-B RelB-p52 complexes. In turn, these complexes regulate genes encoding molecules involved in B-cell survival and lymphoid organogenesis. Also participates in the negative feedback of the non-canonical NF-kappa-B signaling pathway by phosphorylating and destabilizing MAP3K14/NIK. Within the nucleus, phosphorylates CREBBP and consequently increases both its transcriptional and histone acetyltransferase activities. Modulates chromatin accessibility at NF-kappa-B-responsive promoters by phosphorylating histones H3 at 'Ser-10' that are subsequently acetylated at 'Lys-14' by CREBBP. Additionally, phosphorylates the CREBBP-interacting protein NCOA3. Also phosphorylates FOXO3 and may regulate this pro-apoptotic transcription factor. Interacts with SASH1. Phosphorylates RIPK1 at 'Ser-25' which represses its kinase activity and consequently prevents TNF-mediated RIPK1-dependent cell death. Phosphorylates AMBRA1 following mitophagy induction, promoting AMBRA1 interaction with ATG8 family proteins and its mitophagic activity. This chain is Inhibitor of nuclear factor kappa-B kinase subunit alpha (CHUK), found in Bos taurus (Bovine).